The chain runs to 429 residues: Phosphomethylpyrimidine synthase (429 aa).

Substrate-binding positions include N66, M95, Y124, H163, 185-187, 226-229, and E265; these read SRG and DGLR. A Zn(2+)-binding site is contributed by H269. Substrate is bound at residue Y292. H333 is a binding site for Zn(2+). The [4Fe-4S] cluster site is built by C407, C410, and C414.

The protein belongs to the ThiC family. [4Fe-4S] cluster serves as cofactor.

It catalyses the reaction 5-amino-1-(5-phospho-beta-D-ribosyl)imidazole + S-adenosyl-L-methionine = 4-amino-2-methyl-5-(phosphooxymethyl)pyrimidine + CO + 5'-deoxyadenosine + formate + L-methionine + 3 H(+). Its pathway is cofactor biosynthesis; thiamine diphosphate biosynthesis. In terms of biological role, catalyzes the synthesis of the hydroxymethylpyrimidine phosphate (HMP-P) moiety of thiamine from aminoimidazole ribotide (AIR) in a radical S-adenosyl-L-methionine (SAM)-dependent reaction. The polypeptide is Phosphomethylpyrimidine synthase (Pyrococcus furiosus (strain ATCC 43587 / DSM 3638 / JCM 8422 / Vc1)).